The sequence spans 464 residues: Delta(5) fatty acid desaturase A (464 aa).

One can recognise a Cytochrome b5 heme-binding domain in the interval 13-90 (GKQYSWSELA…LKNYEIGYIS (78 aa)). The heme site is built by histidine 48 and histidine 71. A run of 2 helical transmembrane segments spans residues 125–145 (AVSIFSRLALVYLLVFVTYYL) and 153–173 (FYLNCFLAIVYALCNSLFSMH). Positions 176–180 (HDSCH) match the Histidine box-1 motif. A Histidine box-2 motif is present at residues 212-217 (HVIGHH). The helical transmembrane segment at 318–338 (FTDLICYFLIAEFVFGWYLTI) threads the bilayer. The Histidine box-3 motif lies at 396–400 (QVVHH).

This sequence belongs to the fatty acid desaturase type 1 family. It depends on Fe cation as a cofactor.

It is found in the membrane. Functionally, specific for desaturation of the 5 position in C16 and C18 fatty acids. This chain is Delta(5) fatty acid desaturase A (fadA), found in Dictyostelium discoideum (Social amoeba).